A 473-amino-acid polypeptide reads, in one-letter code: Reticulon-4 receptor (473 aa).

A signal peptide spans 1-26 (MKRASSGGSRLLAWVLWLQAWRVATP). 2 disulfide bridges follow: cysteine 27-cysteine 33 and cysteine 31-cysteine 43. The LRRNT domain maps to 27–57 (CPGACVCYNEPKVTTSCPQQGLQAVPTGIPA). LRR repeat units lie at residues 58 to 79 (SSQR…SFQS), 82 to 103 (NLTI…AFTG), 106 to 128 (LLEQ…TFHG), 131 to 152 (HLHT…LFRG), 155 to 176 (ALQY…TFRD), 179 to 200 (NLTH…AFRG), 203 to 224 (SLDR…AFRD), and 227 to 248 (RLMT…VLMP). N-linked (GlcNAc...) asparagine glycosylation is present at asparagine 82. Asparagine 179 carries N-linked (GlcNAc...) asparagine glycosylation. Residues 260–311 (NPWVCDCRARPLWAWLQKFRGSSSEVPCNLPQRLADRDLKRLAASDLEGCAV) enclose the LRRCT domain. Cystine bridges form between cysteine 264-cysteine 287, cysteine 266-cysteine 335, and cysteine 309-cysteine 336. The interval 346–446 (VLEPGRPASA…GASGTGDAEG (101 aa)) is disordered. N-linked (GlcNAc...) asparagine glycosylation is present at asparagine 372. Residues 413-429 (PRRRPGCSRKNRTRSHC) are compositionally biased toward basic residues. Residues 434–445 (AGSGASGTGDAE) are compositionally biased toward gly residues. A lipid anchor (GPI-anchor amidated serine) is attached at serine 447. The propeptide at 448–473 (GALPALACSLAPLGLALVLWTVLGPC) is removed in mature form.

Belongs to the Nogo receptor family. As to quaternary structure, homodimer. Interacts with MAG. Interacts with RTN4. Interacts with NGFR. Interacts with LINGO1. Interacts with KIAA0319L. Interacts with OLFM1; this inhibits interaction with LINGO1 and NGFR. Interacts with OMG. N-glycosylated. O-glycosylated. Contains terminal sialic acid groups on its glycan chains. As to expression, detected in embryonic hippocampus neurons. Detected in brain (at protein level). Detected in neurons in the neocortex, in hippocampus, dorsal thalamus, cerebellum granule cell layer and the mitral cell layer in the olfactory bulb. Detected in brain, dorsal root ganglion and heart.

The protein resides in the cell membrane. Its subcellular location is the membrane raft. It localises to the cell projection. The protein localises to the dendrite. It is found in the axon. The protein resides in the perikaryon. In terms of biological role, receptor for RTN4, OMG and MAG. Functions as a receptor for the sialylated gangliosides GT1b and GM1. Besides, functions as a receptor for chondroitin sulfate proteoglycans. Can also bind heparin. Intracellular signaling cascades are triggered via the coreceptor NGFR. Signaling mediates activation of Rho and downstream reorganization of the actin cytoskeleton. Mediates axonal growth inhibition. Mediates axonal growth inhibition and plays a role in regulating axon regeneration and neuronal plasticity in the adult central nervous system. Plays a role in postnatal brain development. Required for normal axon migration across the brain midline and normal formation of the corpus callosum. Protects motoneurons against apoptosis; protection against apoptosis is probably mediated via interaction with MAG. Acts in conjunction with RTN4 and LINGO1 in regulating neuronal precursor cell motility during cortical development. Like other family members, plays a role in restricting the number dendritic spines and the number of synapses that are formed during brain development. In Mus musculus (Mouse), this protein is Reticulon-4 receptor (Rtn4r).